The chain runs to 497 residues: Angiopoietin-1 (497 aa).

Positions 1–19 (MTVFLSFAFLAAILTHIGC) are cleaved as a signal peptide. N92, N122, N154, N243, and N294 each carry an N-linked (GlcNAc...) asparagine glycan. A coiled-coil region spans residues 158 to 256 (RLEIQLLENS…LQKQQLELMD (99 aa)). The 221-residue stretch at 276–496 (KEEEKPFRDC…STTMMIRPLD (221 aa)) folds into the Fibrinogen C-terminal domain. 2 disulfide bridges follow: C285/C314 and C438/C451.

In terms of assembly, homooligomer. Interacts with TEK/TIE2. Interacts with SVEP1/polydom. Interacts with THBD; this interaction significantly inhibits the generation of activated PC and TAFIa/CPB2 by the thrombin/thrombomodulin complex.

Its subcellular location is the secreted. Binds and activates TIE2 receptor by inducing its tyrosine phosphorylation. Implicated in endothelial developmental processes later and distinct from that of VEGF. Appears to play a crucial role in mediating reciprocal interactions between the endothelium and surrounding matrix and mesenchyme. Mediates blood vessel maturation/stability. It may play an important role in the heart early development. The sequence is that of Angiopoietin-1 (ANGPT1) from Canis lupus familiaris (Dog).